Reading from the N-terminus, the 275-residue chain is MSLVLAVYGKGGIGKSTTSANISAALALKGAKVLQIGCDPKHDSTFPITGKLQKTVIEALEEVDFHHEELTADDVIETGFAGIDGLEAGGPPAGSGCGGYVVGESVTLLQELGLYDKYDVILFDVLGDVVCGGFSAPLNYADYAIIIATNDFDSIFAANRLCMAIQQKSVRYKVKLAGIVANRVDYTTGGGTNMLDQFAEKVGTRLLAKVPYHELIRKSRFAGKTLFAMEDQPGKDDCLVPYNEIADFLMQENPAATVPVPIGDREIFSMVGGWQ.

ATP-binding positions include 12–17 (GIGKST) and Lys-41. A Mg(2+)-binding site is contributed by Ser-16. Residues Cys-97 and Cys-131 each coordinate [4Fe-4S] cluster. Residue 182–183 (NR) participates in ATP binding.

This sequence belongs to the NifH/BchL/ChlL family. As to quaternary structure, homodimer. Protochlorophyllide reductase is composed of three subunits; BchL, BchN and BchB. [4Fe-4S] cluster is required as a cofactor.

The enzyme catalyses chlorophyllide a + oxidized 2[4Fe-4S]-[ferredoxin] + 2 ADP + 2 phosphate = protochlorophyllide a + reduced 2[4Fe-4S]-[ferredoxin] + 2 ATP + 2 H2O. Its pathway is porphyrin-containing compound metabolism; bacteriochlorophyll biosynthesis (light-independent). Its function is as follows. Component of the dark-operative protochlorophyllide reductase (DPOR) that uses Mg-ATP and reduced ferredoxin to reduce ring D of protochlorophyllide (Pchlide) to form chlorophyllide a (Chlide). This reaction is light-independent. The L component serves as a unique electron donor to the NB-component of the complex, and binds Mg-ATP. The polypeptide is Light-independent protochlorophyllide reductase iron-sulfur ATP-binding protein (Chlorobium limicola (strain DSM 245 / NBRC 103803 / 6330)).